A 362-amino-acid polypeptide reads, in one-letter code: Peptide chain release factor 1 (362 aa).

The residue at position 232 (Gln232) is an N5-methylglutamine.

This sequence belongs to the prokaryotic/mitochondrial release factor family. Methylated by PrmC. Methylation increases the termination efficiency of RF1.

It localises to the cytoplasm. Peptide chain release factor 1 directs the termination of translation in response to the peptide chain termination codons UAG and UAA. The protein is Peptide chain release factor 1 of Myxococcus xanthus.